A 176-amino-acid polypeptide reads, in one-letter code: UBA-like domain-containing protein 1 (176 aa).

The interval 87–176 is disordered; sequence SESFHGGGGS…RAHPAMEAER (90 aa). The segment covering 120-137 has biased composition (low complexity); it reads TPSWPTAASPPGGPQQHQ. Pro residues predominate over residues 138-150; sequence PQPPLWTPAPPSP. Basic and acidic residues predominate over residues 166 to 176; sequence PRAHPAMEAER.

It belongs to the UBALD family.

The protein is UBA-like domain-containing protein 1 (Ubald1) of Mus musculus (Mouse).